The sequence spans 154 residues: uncharacterized protein (154 aa).

4 helical membrane-spanning segments follow: residues 15–37 (DFSF…ALIT), 58–80 (FAAM…WLWG), 95–116 (LGAL…FAFT), and 123–145 (LVIS…FVPH).

The protein resides in the cell membrane. This is an uncharacterized protein from Archaeoglobus fulgidus (strain ATCC 49558 / DSM 4304 / JCM 9628 / NBRC 100126 / VC-16).